The following is a 376-amino-acid chain: Aminomethyltransferase (376 aa).

Belongs to the GcvT family. In terms of assembly, the glycine cleavage system is composed of four proteins: P, T, L and H.

The catalysed reaction is N(6)-[(R)-S(8)-aminomethyldihydrolipoyl]-L-lysyl-[protein] + (6S)-5,6,7,8-tetrahydrofolate = N(6)-[(R)-dihydrolipoyl]-L-lysyl-[protein] + (6R)-5,10-methylene-5,6,7,8-tetrahydrofolate + NH4(+). In terms of biological role, the glycine cleavage system catalyzes the degradation of glycine. This is Aminomethyltransferase from Nostoc sp. (strain PCC 7120 / SAG 25.82 / UTEX 2576).